The following is an 85-amino-acid chain: Large ribosomal subunit protein bL27 (85 aa).

A disordered region spans residues 1 to 25 (MAHKKAGGSSRNGRDSHSKRLGVKH).

The protein belongs to the bacterial ribosomal protein bL27 family.

The polypeptide is Large ribosomal subunit protein bL27 (Buchnera aphidicola subsp. Baizongia pistaciae (strain Bp)).